Consider the following 282-residue polypeptide: MSSYANHQALAGLTLGKSTDYRDTYDASLLQGVPRSLNRDPLGLKADNLPFHGADIWTLYELSWLNAKGLPQVAVGHVELDYTSVNLIESKSFKLYLNSFNQTSFNNWDEVLKTLERDLSTCAQGKVSVALYRLDELEGQPIGHFNGTCIDDQDITIDNYEFTTDYLENATCGEKVVEETLVSHLLKSNCLITHQPDWGSIQIQYRGRQIDREKLLRYLVSFRHHNEFHEQCVERIFNDLLRFCQPEKLSVYARYTRRGGLDINPWRSNSDFVPSTTRLVRQ.

88–90 (IES) is a substrate binding site. 90-91 (SK) provides a ligand contact to NADPH. The Thioimide intermediate role is filled by C190. D197 serves as the catalytic Proton donor. 229-230 (HE) is a binding site for substrate. 258–259 (RG) provides a ligand contact to NADPH.

The protein belongs to the GTP cyclohydrolase I family. QueF type 2 subfamily. Homodimer.

It localises to the cytoplasm. The enzyme catalyses 7-aminomethyl-7-carbaguanine + 2 NADP(+) = 7-cyano-7-deazaguanine + 2 NADPH + 3 H(+). The protein operates within tRNA modification; tRNA-queuosine biosynthesis. Functionally, catalyzes the NADPH-dependent reduction of 7-cyano-7-deazaguanine (preQ0) to 7-aminomethyl-7-deazaguanine (preQ1). The polypeptide is NADPH-dependent 7-cyano-7-deazaguanine reductase (Shigella dysenteriae serotype 1 (strain Sd197)).